Consider the following 231-residue polypeptide: Ribonuclease 3 (231 aa).

The RNase III domain occupies 3–130; sequence MHEFFENFGI…VTAAIYLDQT (128 aa). E43 provides a ligand contact to Mg(2+). The active site involves D47. 2 residues coordinate Mg(2+): D116 and E119. Residue E119 is part of the active site. Residues 157 to 228 form the DRBM domain; it reads DYKSELQEII…AKDCLNKLKK (72 aa).

Belongs to the ribonuclease III family. Homodimer. The cofactor is Mg(2+).

The protein localises to the cytoplasm. It carries out the reaction Endonucleolytic cleavage to 5'-phosphomonoester.. Digests double-stranded RNA. Involved in the processing of primary rRNA transcript to yield the immediate precursors to the large and small rRNAs (23S and 16S). Processes some mRNAs, and tRNAs when they are encoded in the rRNA operon. Processes pre-crRNA and tracrRNA of type II CRISPR loci if present in the organism. This Mesoplasma florum (strain ATCC 33453 / NBRC 100688 / NCTC 11704 / L1) (Acholeplasma florum) protein is Ribonuclease 3.